A 97-amino-acid polypeptide reads, in one-letter code: Citrate lyase acyl carrier protein (97 aa).

S14 carries the O-(phosphoribosyl dephospho-coenzyme A)serine modification.

The protein belongs to the CitD family. Oligomer with a subunit composition of (alpha,beta,gamma)6.

The protein resides in the cytoplasm. Functionally, covalent carrier of the coenzyme of citrate lyase. In Lactobacillus acidophilus (strain ATCC 700396 / NCK56 / N2 / NCFM), this protein is Citrate lyase acyl carrier protein.